The following is a 215-amino-acid chain: Large ribosomal subunit protein uL4 (215 aa).

The interval Thr-46–Arg-72 is disordered. A compositionally biased stretch (gly residues) spans Ser-56–Ala-71.

Belongs to the universal ribosomal protein uL4 family. As to quaternary structure, part of the 50S ribosomal subunit.

In terms of biological role, one of the primary rRNA binding proteins, this protein initially binds near the 5'-end of the 23S rRNA. It is important during the early stages of 50S assembly. It makes multiple contacts with different domains of the 23S rRNA in the assembled 50S subunit and ribosome. Forms part of the polypeptide exit tunnel. This chain is Large ribosomal subunit protein uL4, found in Helicobacter pylori (strain G27).